The chain runs to 454 residues: Allantoinase (454 aa).

Zn(2+) is bound by residues H60, H62, K147, H183, H239, and D312. N6-carboxylysine is present on K147.

It belongs to the metallo-dependent hydrolases superfamily. Allantoinase family. In terms of assembly, homotetramer. Requires Zn(2+) as cofactor. In terms of processing, carboxylation allows a single lysine to coordinate two zinc ions.

The catalysed reaction is (S)-allantoin + H2O = allantoate + H(+). It participates in nitrogen metabolism; (S)-allantoin degradation; allantoate from (S)-allantoin: step 1/1. Its function is as follows. Catalyzes the conversion of allantoin (5-ureidohydantoin) to allantoic acid by hydrolytic cleavage of the five-member hydantoin ring. The chain is Allantoinase from Bacillus velezensis (strain DSM 23117 / BGSC 10A6 / LMG 26770 / FZB42) (Bacillus amyloliquefaciens subsp. plantarum).